Reading from the N-terminus, the 152-residue chain is Endoribonuclease YbeY (152 aa).

3 residues coordinate Zn(2+): His-101, His-105, and His-111. The interval 132–152 (PSSLIERTTKPAKKAAKRKKR) is disordered. Residues 141–152 (KPAKKAAKRKKR) are compositionally biased toward basic residues.

It belongs to the endoribonuclease YbeY family. Zn(2+) serves as cofactor.

It localises to the cytoplasm. In terms of biological role, single strand-specific metallo-endoribonuclease involved in late-stage 70S ribosome quality control and in maturation of the 3' terminus of the 16S rRNA. This chain is Endoribonuclease YbeY, found in Koribacter versatilis (strain Ellin345).